Consider the following 248-residue polypeptide: Homeotic protein ultrabithorax (248 aa).

A compositionally biased stretch (gly residues) spans 116–125 (GTGGGGGGSA). The segment at 116-191 (GTGGGGGGSA…GSAGVVGGAG (76 aa)) is disordered. The span at 126 to 139 (GSANGANNTANGQN) shows a compositional bias: low complexity. Gly residues-rich tracts occupy residues 140-152 (TSGG…GGGM) and 182-191 (GSAGVVGGAG). The Antp-type hexapeptide motif lies at 241 to 246 (FYPWMA).

The protein belongs to the Antp homeobox family.

It localises to the nucleus. Its function is as follows. Sequence-specific transcription factor which is part of a developmental regulatory system that provides cells with specific positional identities on the anterior-posterior axis. Binds the consensus region 5'-TTAAT[GT][GA]-3'. The sequence is that of Homeotic protein ultrabithorax (Ubx) from Musca domestica (House fly).